The following is a 322-amino-acid chain: Ferrochelatase (322 aa).

Fe cation is bound by residues histidine 193 and glutamate 274.

This sequence belongs to the ferrochelatase family.

The protein localises to the cytoplasm. It carries out the reaction heme b + 2 H(+) = protoporphyrin IX + Fe(2+). It functions in the pathway porphyrin-containing compound metabolism; protoheme biosynthesis; protoheme from protoporphyrin-IX: step 1/1. In terms of biological role, catalyzes the ferrous insertion into protoporphyrin IX. The protein is Ferrochelatase of Aliivibrio fischeri (strain MJ11) (Vibrio fischeri).